The primary structure comprises 203 residues: Large ribosomal subunit protein bL25 (203 aa).

It belongs to the bacterial ribosomal protein bL25 family. CTC subfamily. As to quaternary structure, part of the 50S ribosomal subunit; part of the 5S rRNA/L5/L18/L25 subcomplex. Contacts the 5S rRNA. Binds to the 5S rRNA independently of L5 and L18.

This is one of the proteins that binds to the 5S RNA in the ribosome where it forms part of the central protuberance. The polypeptide is Large ribosomal subunit protein bL25 (Chlorobium phaeovibrioides (strain DSM 265 / 1930) (Prosthecochloris vibrioformis (strain DSM 265))).